Here is a 943-residue protein sequence, read N- to C-terminus: Lysine-specific demethylase JMJ21 (943 aa).

In terms of domain architecture, F-box spans 14–60 (LGSLSVLPDETICVLLEYLAPRDIAHLACVSSVMYILCNEEPLWMSL). Positions 216–379 (EAAPELLKDY…FVCLDMAPGY (164 aa)) constitute a JmjC domain. 3 residues coordinate Fe cation: His-262, Asp-264, and His-347. Positions 396–410 (NSEDLEEETHDEEDN) are enriched in acidic residues. Positions 396–438 (NSEDLEEETHDEEDNTLSYSDLTRKEKRTRMNGGGETENREED) are disordered.

This sequence belongs to the JARID1 histone demethylase family. It depends on Fe(2+) as a cofactor. In terms of tissue distribution, mostly expressed in leaves, and, to a lower extent, in inflorescences, roots, siliques and stems.

The protein resides in the nucleus. May function as histone H3 lysine demethylase and be involved in regulation of gene expression. In Arabidopsis thaliana (Mouse-ear cress), this protein is Lysine-specific demethylase JMJ21.